Consider the following 375-residue polypeptide: Alcohol dehydrogenase 1 (375 aa).

Serine 1 carries the post-translational modification N-acetylserine. Positions 46, 67, 97, 100, 103, 111, and 174 each coordinate Zn(2+). NAD(+)-binding positions include 199-204 (GLGGVG), aspartate 223, lysine 228, 293-295 (VGV), and arginine 370.

This sequence belongs to the zinc-containing alcohol dehydrogenase family. Class-I subfamily. Homodimer. Requires Zn(2+) as cofactor.

It is found in the cytoplasm. It catalyses the reaction a primary alcohol + NAD(+) = an aldehyde + NADH + H(+). The enzyme catalyses a secondary alcohol + NAD(+) = a ketone + NADH + H(+). The protein is Alcohol dehydrogenase 1 of Naja naja (Indian cobra).